A 657-amino-acid chain; its full sequence is Glycogen debranching enzyme (657 aa).

Asp336 (nucleophile) is an active-site residue. The Proton donor role is filled by Glu371. Residues 460 to 479 are disordered; it reads ANGEENRDGTNNNYSNNHGK.

The protein belongs to the glycosyl hydrolase 13 family.

The catalysed reaction is Hydrolysis of (1-&gt;6)-alpha-D-glucosidic linkages to branches with degrees of polymerization of three or four glucose residues in limit dextrin.. It participates in glycan degradation; glycogen degradation. Its function is as follows. Removes maltotriose and maltotetraose chains that are attached by 1,6-alpha-linkage to the limit dextrin main chain, generating a debranched limit dextrin. In Escherichia coli O9:H4 (strain HS), this protein is Glycogen debranching enzyme.